A 318-amino-acid chain; its full sequence is MSAPEVENKPADAPEHCPGTESENAGKASACAGCPNQQICATGPKGPDPSIALVKEKLKEVRNKILVLSGKGGVGKSTVTALLSRAMAQLNPERNYGVLDVDICGPSQPRVLGVLGEQVHQSGSGWSPVYVEDNLSLMSIGFLLGSPDDAIIWRGPKKNGMIRQFLTEVDWGQLDYLVLDTPPGTSDEHLSATTFLKETDGNWGAVLVTTPQEVALLDVRKEITFCKKMGIPVVGVVENMSVFVCPKCTTESDIFPAKTGGAEKMCEEMEVAYLGKLPLDPRLAKCCDEGKDFITEHSKSPTVIALHQIVAKVQDFFD.

The span at 1–15 shows a compositional bias: basic and acidic residues; that stretch reads MSAPEVENKPADAPE. The tract at residues 1-29 is disordered; it reads MSAPEVENKPADAPEHCPGTESENAGKAS. [4Fe-4S] cluster contacts are provided by Cys-17, Cys-31, Cys-34, and Cys-40. Position 70 to 77 (70 to 77) interacts with ATP; sequence GKGGVGKS. [4Fe-4S] cluster-binding residues include Cys-245 and Cys-248.

Belongs to the Mrp/NBP35 ATP-binding proteins family. NUBP1/NBP35 subfamily. In terms of assembly, heterotetramer of 2 Nubp1 and 2 Nubp2 chains. [4Fe-4S] cluster serves as cofactor.

It is found in the cytoplasm. Functionally, component of the cytosolic iron-sulfur (Fe/S) protein assembly (CIA) machinery. Required for maturation of extramitochondrial Fe-S proteins. The Nubp1-Nubp2 heterotetramer forms a Fe-S scaffold complex, mediating the de novo assembly of an Fe-S cluster and its transfer to target apoproteins. The sequence is that of Cytosolic Fe-S cluster assembly factor Nubp1 homolog from Aedes aegypti (Yellowfever mosquito).